We begin with the raw amino-acid sequence, 533 residues long: MQLHISPSMRSITISSSNEFIDLMKIKVAARHISYRTLFHTILILAFLLPFVFILTAVVTLEGVNKCSSFDCFGRRLGPRLLGRIDDSEQRLVRDFYKILNEVSTQEIPDGLKLPESFSQLVSDMKNNHYDAKTFALVFRAMVEKFERDLRESKFAELMNKHFAASSIPKGIHCLSLRLTDEYSSNAHARRQLPSPELLPVLSDNAYHHFVLATDNILAASVVVSSAVQSSSKPEKIVFHVITDKKTYAGMHSWFALNSVAPAIVEVKSVHQFDWLTRENVPVLEAVESHNSIRNYYHGNHIAGANLSETTPRTFASKLQSRSPKYISLLNHLRIYLPELFPNLDKVVFLDDDIVIQKDLSPLWDIDLNGKVNGAVETCRGEDVWVMSKRLRNYFNFSHPLIAKHLDPEECAWAYGMNIFDLRTWRKTNIRETYHSWLKENLKSNLTMWKLGTLPPALIAFKGHVQPIDSSWHMLGLGYQSKTNLENAKKAAVIHYNGQSKPWLEIGFEHLRPFWTKYVNYSNDFIKNCHILE.

Over 1–40 (MQLHISPSMRSITISSSNEFIDLMKIKVAARHISYRTLFH) the chain is Cytoplasmic. Residues 41-61 (TILILAFLLPFVFILTAVVTL) form a helical; Signal-anchor for type II membrane protein membrane-spanning segment. The Lumenal portion of the chain corresponds to 62 to 533 (EGVNKCSSFD…DFIKNCHILE (472 aa)). Residues N306, N396, N445, and N520 are each glycosylated (N-linked (GlcNAc...) asparagine).

Belongs to the glycosyltransferase 8 family. In terms of tissue distribution, expressed in roots, inflorescences, siliques, leaves and stems. Accumulates in pollen grains.

It is found in the golgi apparatus membrane. It participates in glycan metabolism; pectin biosynthesis. Functionally, may be involved in pectin and/or xylans biosynthesis in cell walls. Together with GAUT14, required for pollen tube growth, possibly through the regulation of pectin biosynthesis and repartition in the pollen tube wall. The polypeptide is Probable galacturonosyltransferase 13 (Arabidopsis thaliana (Mouse-ear cress)).